The primary structure comprises 565 residues: Urocanate hydratase (565 aa).

NAD(+)-binding positions include 61–62, Gln139, 185–187, Glu205, Arg210, 251–252, 272–276, 282–283, and Tyr331; these read GG, GMG, NA, QTSAH, and YL. Cys419 is a catalytic residue. Residues 453–472 are disordered; the sequence is LDSGSVSSPNRETESMKDGS. Positions 463 to 472 are enriched in basic and acidic residues; that stretch reads RETESMKDGS. Residue Gly501 participates in NAD(+) binding.

Belongs to the urocanase family. Requires NAD(+) as cofactor.

It localises to the cytoplasm. It catalyses the reaction 4-imidazolone-5-propanoate = trans-urocanate + H2O. The protein operates within amino-acid degradation; L-histidine degradation into L-glutamate; N-formimidoyl-L-glutamate from L-histidine: step 2/3. Catalyzes the conversion of urocanate to 4-imidazolone-5-propionate. In Pseudomonas syringae, this protein is Urocanate hydratase.